A 221-amino-acid polypeptide reads, in one-letter code: MSSQPKLRILCLHGYRQCDQSFRQKTGSTRKLVKSLAEFEFVNGVHSVAVDEHVDSSRAWWFSNNEAMSFSSRESTEVAVGFEESVAAVVKFIEENGPFDGLLGFSQGASMVHLLIAKAQLGEIKLPGIRFAIFFSGFLSLSSKHDSLTLLRIKEFPSMHVFGDADEIVARPKSEKMADMFDVEPLRIAHDGGHVVPSMSKHKEKIAGFMREQLDRKIENN.

Residues Ser-106, Asp-166, and His-194 each act as charge relay system in the active site.

Belongs to the LovG family.

The protein is Esterase C25G4.2 of Caenorhabditis elegans.